The primary structure comprises 209 residues: uncharacterized protein (209 aa).

Positions 1–11 (MMRTNAGKETK) are enriched in basic and acidic residues. The segment at 1–20 (MMRTNAGKETKGYNPAPADS) is disordered.

This is an uncharacterized protein from Caenorhabditis elegans.